The primary structure comprises 356 residues: Glutamine synthetase root isozyme 3 (356 aa).

The GS beta-grasp domain occupies Ile-19–Gly-99. The region spanning Lys-106 to Pro-356 is the GS catalytic domain.

The protein belongs to the glutamine synthetase family. As to quaternary structure, homooctamer. In terms of tissue distribution, found in all the tissues examined with higher expression found in tissues of the root.

The protein resides in the cytoplasm. The enzyme catalyses L-glutamate + NH4(+) + ATP = L-glutamine + ADP + phosphate + H(+). Its function is as follows. Plays a role in the flow of nitrogen into nitrogenous organic compounds. The chain is Glutamine synthetase root isozyme 3 (GLN4) from Zea mays (Maize).